A 592-amino-acid chain; its full sequence is Inactive heparanase-2 (592 aa).

An N-terminal signal peptide occupies residues 1–38 (MRVLCAFPEAMASSSSRPPSCLALVALFLALLLHLSLS). N-linked (GlcNAc...) asparagine glycosylation is found at asparagine 254 and asparagine 392.

The protein belongs to the glycosyl hydrolase 79 family. Interacts with HPSE. Interacts with SDC1 (via glycan chains).

It is found in the secreted. Its subcellular location is the extracellular space. The protein resides in the extracellular matrix. Functionally, binds heparin and heparan sulfate with high affinity, but lacks heparanase activity. Inhibits HPSE, possibly by competing for its substrates (in vitro). This Mus musculus (Mouse) protein is Inactive heparanase-2 (Hpse2).